A 499-amino-acid chain; its full sequence is Bifunctional purine biosynthesis protein PurH (499 aa).

One can recognise an MGS-like domain in the interval 1-144 (MINRALISVY…KNFKDVIVVT (144 aa)).

Belongs to the PurH family.

It carries out the reaction (6R)-10-formyltetrahydrofolate + 5-amino-1-(5-phospho-beta-D-ribosyl)imidazole-4-carboxamide = 5-formamido-1-(5-phospho-D-ribosyl)imidazole-4-carboxamide + (6S)-5,6,7,8-tetrahydrofolate. The enzyme catalyses IMP + H2O = 5-formamido-1-(5-phospho-D-ribosyl)imidazole-4-carboxamide. Its pathway is purine metabolism; IMP biosynthesis via de novo pathway; 5-formamido-1-(5-phospho-D-ribosyl)imidazole-4-carboxamide from 5-amino-1-(5-phospho-D-ribosyl)imidazole-4-carboxamide (10-formyl THF route): step 1/1. The protein operates within purine metabolism; IMP biosynthesis via de novo pathway; IMP from 5-formamido-1-(5-phospho-D-ribosyl)imidazole-4-carboxamide: step 1/1. The sequence is that of Bifunctional purine biosynthesis protein PurH from Clostridium kluyveri (strain NBRC 12016).